The sequence spans 429 residues: MPIIEQVGAREILDSRGNPTVEVEVGLLDGTVSRAAVPSGASTGEHEAVELRDGGSRYLGKGVEKAVEAVLDEIAPAVIGLGADEQRLVDQALVDLDGTPDKSRLGANAILGVSLAVAKAAAQSAELPLFRYVGGPNAHILPVPMMNIINGGAHADTGVDVQEFMIAPIGAPSFKEALRWGAEVYHSLKSVLKKQGLATGLGDEGGFAPDLPGTRAALDLIGTAIEAAGLKVGSDVALALDVAATEFYTEGTGYAFEKETRTAEQMAAFYAQLLEAYPLVSIEDPLSEDDWDGWVALTAAIGDKVQLVGDDLFVTNPERLEDGIERGAANALLVKVNQIGTLTETLDAVSLAHNAGYKTMMSHRSGETEDTTIADLAVAVGSGQIKTGAPARSERVAKYNQLLRIEEELGDAARYAGDLAFPRFSVETK.

Position 162 (glutamine 162) interacts with (2R)-2-phosphoglycerate. Glutamate 204 (proton donor) is an active-site residue. Mg(2+) is bound by residues aspartate 241, glutamate 283, and aspartate 310. Lysine 335, arginine 364, serine 365, and lysine 386 together coordinate (2R)-2-phosphoglycerate. Lysine 335 (proton acceptor) is an active-site residue.

This sequence belongs to the enolase family. Requires Mg(2+) as cofactor.

It is found in the cytoplasm. The protein localises to the secreted. It localises to the cell surface. The enzyme catalyses (2R)-2-phosphoglycerate = phosphoenolpyruvate + H2O. It functions in the pathway carbohydrate degradation; glycolysis; pyruvate from D-glyceraldehyde 3-phosphate: step 4/5. In terms of biological role, catalyzes the reversible conversion of 2-phosphoglycerate (2-PG) into phosphoenolpyruvate (PEP). It is essential for the degradation of carbohydrates via glycolysis. This chain is Enolase, found in Mycolicibacterium vanbaalenii (strain DSM 7251 / JCM 13017 / BCRC 16820 / KCTC 9966 / NRRL B-24157 / PYR-1) (Mycobacterium vanbaalenii).